Consider the following 172-residue polypeptide: Adenine phosphoribosyltransferase (172 aa).

This sequence belongs to the purine/pyrimidine phosphoribosyltransferase family. In terms of assembly, homodimer.

The protein resides in the cytoplasm. It carries out the reaction AMP + diphosphate = 5-phospho-alpha-D-ribose 1-diphosphate + adenine. Its pathway is purine metabolism; AMP biosynthesis via salvage pathway; AMP from adenine: step 1/1. Functionally, catalyzes a salvage reaction resulting in the formation of AMP, that is energically less costly than de novo synthesis. This Clostridium perfringens (strain ATCC 13124 / DSM 756 / JCM 1290 / NCIMB 6125 / NCTC 8237 / Type A) protein is Adenine phosphoribosyltransferase.